An 81-amino-acid polypeptide reads, in one-letter code: Acyl carrier protein (81 aa).

In terms of domain architecture, Carrier spans 4-79; the sequence is DEVYSRVRKI…DAVNYILSKK (76 aa). The residue at position 39 (serine 39) is an O-(pantetheine 4'-phosphoryl)serine.

This sequence belongs to the acyl carrier protein (ACP) family. In terms of processing, 4'-phosphopantetheine is transferred from CoA to a specific serine of apo-ACP by AcpS. This modification is essential for activity because fatty acids are bound in thioester linkage to the sulfhydryl of the prosthetic group.

It localises to the cytoplasm. The protein operates within lipid metabolism; fatty acid biosynthesis. Functionally, carrier of the growing fatty acid chain in fatty acid biosynthesis. This Synechococcus sp. (strain JA-3-3Ab) (Cyanobacteria bacterium Yellowstone A-Prime) protein is Acyl carrier protein.